Here is a 1408-residue protein sequence, read N- to C-terminus: DNA-directed RNA polymerase subunit beta' (1408 aa).

Positions 70, 72, 85, and 88 each coordinate Zn(2+). The Mg(2+) site is built by aspartate 458, aspartate 460, and aspartate 462. Zn(2+) contacts are provided by cysteine 813, cysteine 887, cysteine 894, and cysteine 897. Residues 1387–1408 (AELEAATATAPADAGGDSPATE) form a disordered region. The segment covering 1389–1408 (LEAATATAPADAGGDSPATE) has biased composition (low complexity).

Belongs to the RNA polymerase beta' chain family. The RNAP catalytic core consists of 2 alpha, 1 beta, 1 beta' and 1 omega subunit. When a sigma factor is associated with the core the holoenzyme is formed, which can initiate transcription. The cofactor is Mg(2+). Requires Zn(2+) as cofactor.

It catalyses the reaction RNA(n) + a ribonucleoside 5'-triphosphate = RNA(n+1) + diphosphate. DNA-dependent RNA polymerase catalyzes the transcription of DNA into RNA using the four ribonucleoside triphosphates as substrates. This chain is DNA-directed RNA polymerase subunit beta', found in Polaromonas sp. (strain JS666 / ATCC BAA-500).